Reading from the N-terminus, the 591-residue chain is Melatonin-related receptor (591 aa).

Topologically, residues 1–38 are extracellular; the sequence is MATVPKSNMGPTKAVPTPFGCIGCKLPKPDYPPALIIF. Residues 39 to 59 traverse the membrane as a helical segment; that stretch reads MFCAMVITVVVDLIGNSMVIL. The Cytoplasmic portion of the chain corresponds to 60–72; that stretch reads AVTKNKKLRNSGN. The helical transmembrane segment at 73–93 threads the bilayer; the sequence is IFVASLSVADMLVAIYPYPLM. The Extracellular segment spans residues 94–111; that stretch reads LYAMSVGGWDLSQLQCQM. A disulfide bond links Cys109 and Cys186. Residues 112–132 traverse the membrane as a helical segment; that stretch reads VGLVTGLSVVGSIFNITAIAI. Residues 133–151 lie on the Cytoplasmic side of the membrane; that stretch reads NRYCYICHSLQYKRIFSLR. The chain crosses the membrane as a helical span at residues 152–172; the sequence is NTCIYLVVTWVMTVLAVLPNM. Topologically, residues 173–196 are extracellular; it reads YIGTIEYDPRTYTCIFNYVNNPAF. A helical membrane pass occupies residues 197–217; the sequence is TVTIVCIHFVLPLIIVGYCYT. Over 218-247 the chain is Cytoplasmic; that stretch reads KIWIKVLAARDPAGQNPDNQFAEVRNFLTM. A helical membrane pass occupies residues 248–268; that stretch reads FVIFLLFAVCWCPVNVLTVLV. Residues 269-281 are Extracellular-facing; that stretch reads AVIPKEMAGKIPN. The helical transmembrane segment at 282–302 threads the bilayer; the sequence is WLYLAAYCIAYFNSCLNAIIY. The Cytoplasmic segment spans residues 303-591; that stretch reads GILNESFRRE…DSDCSDEMAV (289 aa). A disordered region spans residues 378 to 427; sequence LPGDASAPHSDRASVRPKPQTRSTSVYRKPASIHHKSISGHPKSASVYPK.

Belongs to the G-protein coupled receptor 1 family. Homodimer, and heterodimer with MTNR1A and MTNR1B. Interacts with KAT5. Interacts with RTN4 isoform A/NOGO-A. Interacts with TGFBR1. As to expression, strongly expressed in the brain with highly restricted pattern of expression, confined to a subset of the ependymal cells of the third ventricle and a population of cells in the dorsomedial hypothalamic nucleus.

Its subcellular location is the cell membrane. The protein resides in the postsynaptic density. Its function is as follows. G protein-coupled receptor that plays a role in numerous physiological processes including regulation of energy metabolism, neurite outgrowth or cell migration. Promotes self-renewal and neuronal differentiation of neural progenitor cells through activation of the NOTCH and WNT/beta-catenin signaling pathways. Modulates the KAT5-dependent glucocorticoid receptor signaling by modulating KAT5 subcellular compartmentalisation. Also plays a role in the activation TGFBR1 in the absence of TGFBR2 by interfering with FKBP1A binding to TGFBR1, leading to induction of both canonical and non-canonical SMAD signaling pathways resulting in inhibition of proliferation or promotion of migration. The chain is Melatonin-related receptor (Gpr50) from Mus musculus (Mouse).